The primary structure comprises 134 residues: uncharacterized protein (134 aa).

The segment at 1 to 30 (MGTLQGAALRSRERPSWPQETHGHRERTEE) is disordered. A compositionally biased stretch (basic and acidic residues) spans 10 to 30 (RSRERPSWPQETHGHRERTEE).

This is an uncharacterized protein from Homo sapiens (Human).